A 443-amino-acid chain; its full sequence is Xaa-Pro dipeptidase (443 aa).

Residues D246, D257, H339, E384, and E423 each coordinate Mn(2+).

It belongs to the peptidase M24B family. Bacterial-type prolidase subfamily. Mn(2+) serves as cofactor.

The catalysed reaction is Xaa-L-Pro dipeptide + H2O = an L-alpha-amino acid + L-proline. In terms of biological role, splits dipeptides with a prolyl residue in the C-terminal position. The polypeptide is Xaa-Pro dipeptidase (Escherichia coli O8 (strain IAI1)).